Here is a 24-residue protein sequence, read N- to C-terminus: Grammistin Pp 4b (24 aa).

In terms of assembly, exists as aggregates of 3-4 molecules. In terms of tissue distribution, expressed by the skin glands.

It is found in the secreted. Thanks to its abundant amphiphilic alpha-helices, it may integrate into membrane phospholipids, leading to lysis of the membrane. Its hemolytic activity is inhibited by phospholipids, but not by cholesterol. Has antibacterial activity with a broad spectrum against various species of bacteria including both Gram-positive and Gram-negative groups. Also has ichthyotoxic activity. The polypeptide is Grammistin Pp 4b (Pogonoperca punctata (Clown grouper)).